The following is a 552-amino-acid chain: Ribosomal lysine N-methyltransferase 3 (552 aa).

Positions serine 26–glycine 335 constitute an SET domain. Position 334 (tyrosine 334) interacts with S-adenosyl-L-methionine. Positions glutamate 399–leucine 432 are disordered. Residues leucine 413–leucine 432 show a composition bias toward acidic residues.

The protein belongs to the class V-like SAM-binding methyltransferase superfamily.

It localises to the nucleus. Its function is as follows. S-adenosyl-L-methionine-dependent protein-lysine N-methyltransferase that monomethylates 60S ribosomal protein L42 (RPL42A and RPL42B) at 'Lys-40'. This chain is Ribosomal lysine N-methyltransferase 3, found in Saccharomyces cerevisiae (strain ATCC 204508 / S288c) (Baker's yeast).